The sequence spans 277 residues: Uridine-cytidine kinase 1 (277 aa).

A disordered region spans residues 1–30 (MASAGGEDCESPAPEADRPHQRPFLIGVSG). Position 30–38 (30–38 (GGTASGKST)) interacts with ATP. The active site involves Asp65. Asp87, Tyr115, His120, Arg169, Arg178, and Gln186 together coordinate substrate. Asp215 contacts ATP. The segment at 247–277 (SYKRTFSEPGDHPGMLTSGKRSHLESSSRPH) is disordered. Residue Thr251 is modified to Phosphothreonine. Ser253 carries the post-translational modification Phosphoserine. Positions 268 to 277 (SHLESSSRPH) are enriched in basic and acidic residues.

The protein belongs to the uridine kinase family. In terms of tissue distribution, ubiquitous.

It catalyses the reaction uridine + ATP = UMP + ADP + H(+). The enzyme catalyses cytidine + ATP = CMP + ADP + H(+). It functions in the pathway pyrimidine metabolism; CTP biosynthesis via salvage pathway; CTP from cytidine: step 1/3. It participates in pyrimidine metabolism; UMP biosynthesis via salvage pathway; UMP from uridine: step 1/1. Phosphorylates uridine and cytidine to uridine monophosphate and cytidine monophosphate. Does not phosphorylate deoxyribonucleosides or purine ribonucleosides. Can use ATP or GTP as a phosphate donor. Can also phosphorylate cytidine and uridine nucleoside analogs such as 6-azauridine, 5-fluorouridine, 4-thiouridine, 5-bromouridine, N(4)-acetylcytidine, N(4)-benzoylcytidine, 5-fluorocytidine, 2-thiocytidine, 5-methylcytidine, and N(4)-anisoylcytidine. The polypeptide is Uridine-cytidine kinase 1 (UCK1) (Homo sapiens (Human)).